We begin with the raw amino-acid sequence, 99 residues long: Large ribosomal subunit protein uL23 (99 aa).

This sequence belongs to the universal ribosomal protein uL23 family. As to quaternary structure, part of the 50S ribosomal subunit. Contacts protein L29, and trigger factor when it is bound to the ribosome.

Functionally, one of the early assembly proteins it binds 23S rRNA. One of the proteins that surrounds the polypeptide exit tunnel on the outside of the ribosome. Forms the main docking site for trigger factor binding to the ribosome. The protein is Large ribosomal subunit protein uL23 of Magnetococcus marinus (strain ATCC BAA-1437 / JCM 17883 / MC-1).